The primary structure comprises 228 residues: tRNA (guanine-N(1)-)-methyltransferase (228 aa).

Residues glycine 111 and 131–136 (IGDFIL) contribute to the S-adenosyl-L-methionine site.

It belongs to the RNA methyltransferase TrmD family. In terms of assembly, homodimer.

The protein localises to the cytoplasm. It catalyses the reaction guanosine(37) in tRNA + S-adenosyl-L-methionine = N(1)-methylguanosine(37) in tRNA + S-adenosyl-L-homocysteine + H(+). Specifically methylates guanosine-37 in various tRNAs. This Pelagibacter ubique (strain HTCC1062) protein is tRNA (guanine-N(1)-)-methyltransferase.